The primary structure comprises 129 residues: Follitropin subunit beta (129 aa).

Residues 1–18 (MKSVQFCFLFCCWRVICC) form the signal peptide. 6 disulfide bridges follow: C21–C69, C35–C84, C38–C122, C46–C100, C50–C102, and C105–C112. Residues N25 and N42 are each glycosylated (N-linked (GlcNAc...) asparagine).

This sequence belongs to the glycoprotein hormones subunit beta family. In terms of assembly, heterodimer. The active follitropin is a heterodimer composed of an alpha chain/CGA shared with other hormones and a unique beta chain/FSHB shown here.

Its subcellular location is the secreted. Functionally, together with the alpha chain CGA constitutes follitropin, the follicle-stimulating hormone, and provides its biological specificity to the hormone heterodimer. Binds FSHR, a G protein-coupled receptor, on target cells to activate downstream signaling pathways. Follitropin is involved in follicle development and spermatogenesis in reproductive organs. The protein is Follitropin subunit beta (FSHB) of Panthera tigris altaica (Siberian tiger).